A 482-amino-acid polypeptide reads, in one-letter code: Cis-aconitate decarboxylase-like protein oryM (482 aa).

It belongs to the PrpD family.

Its pathway is secondary metabolite biosynthesis. In terms of biological role, cis-aconitate decarboxylase-like protein; part of the gene cluster that mediates the biosynthesis of oryzines, natural products with an unusual maleidride backbone. The two subunits of the fungal fatty acid synthase oryfasA and oryfasB probably form octenoic acid. This fatty acid is most likely activated by the acyl-CoA ligase oryP to give octenyl-CoA before the citrate synthase-like protein oryE catalyzes condensation with oxaloacetate to form tricarboxylic acid. The next steps of the pathways are conjectural, but a favorite possible route has been proposed, beginning with decarboxylation and concomitant dehydration by the decarboxylase oryM, followed by tautomerization, which may lead to the production of a diene intermediate. Reduction of this diene intermediate could give the known metabolite piliformic acid. On the pathway to oryzine B and oryzine A, however, hydroxylation of the diene by the alpha-ketoglutarate-dependent dioxygenase oryG and lactonisation by the lactonohydrolases oryH or oryL could give oryzine B directly. Finally, enoyl reduction by the dehydrogenase oryD would then convert oryzine B into oryzine A. In Aspergillus oryzae (strain ATCC 42149 / RIB 40) (Yellow koji mold), this protein is Cis-aconitate decarboxylase-like protein oryM.